The following is a 487-amino-acid chain: GTPase Der (487 aa).

An EngA-type G 1 domain is found at 2–166 (LKIAILGRPN…RIKLVANLPE (165 aa)). Residues 8-15 (GRPNVGKS), 55-59 (DTGGV), and 118-121 (NKAD) contribute to the GTP site. The tract at residues 165–194 (PEPREEEEEGLEELSVDEHEESEAALPSNT) is disordered. The segment covering 168–187 (REEEEEGLEELSVDEHEESE) has biased composition (acidic residues). The EngA-type G 2 domain occupies 225 to 398 (LKIALIGRPN…AIDELHHVVS (174 aa)). Residues 231–238 (GRPNVGKS), 278–282 (DTAGL), and 343–346 (NKWD) each bind GTP. The region spanning 399-483 (NKVPTPIVNK…PFDLEFKEKP (85 aa)) is the KH-like domain.

Belongs to the TRAFAC class TrmE-Era-EngA-EngB-Septin-like GTPase superfamily. EngA (Der) GTPase family. Associates with the 50S ribosomal subunit.

GTPase that plays an essential role in the late steps of ribosome biogenesis. The polypeptide is GTPase Der (Chlamydia pneumoniae (Chlamydophila pneumoniae)).